Consider the following 105-residue polypeptide: uncharacterized protein (105 aa).

3 consecutive transmembrane segments (helical) span residues 14-34 (ILLM…IVAW), 41-61 (ETVC…FAFL), and 80-100 (VGFT…IFTI).

It localises to the cell membrane. This is an uncharacterized protein from Treponema pallidum (strain Nichols).